The following is a 429-amino-acid chain: Small ribosomal subunit protein bS1 (429 aa).

S1 motif domains lie at 55-128, 144-211, 231-299, and 316-385; these read GDVV…LSKK, GDTV…SRKA, GEVV…LSIK, and GSVL…LSMK. Residues 382–399 show a composition bias toward basic and acidic residues; it reads LSMKALEEKPEREDRRGN. Positions 382 to 412 are disordered; that stretch reads LSMKALEEKPEREDRRGNDGSASRADIAAYK.

It belongs to the bacterial ribosomal protein bS1 family.

Functionally, binds mRNA; thus facilitating recognition of the initiation point. It is needed to translate mRNA with a short Shine-Dalgarno (SD) purine-rich sequence. The sequence is that of Small ribosomal subunit protein bS1 (rps1) from Leuconostoc lactis.